Reading from the N-terminus, the 492-residue chain is Glutamyl-tRNA(Gln) amidotransferase subunit A (492 aa).

Catalysis depends on charge relay system residues K78 and S158. The Acyl-ester intermediate role is filled by S182.

Belongs to the amidase family. GatA subfamily. As to quaternary structure, heterotrimer of A, B and C subunits.

The catalysed reaction is L-glutamyl-tRNA(Gln) + L-glutamine + ATP + H2O = L-glutaminyl-tRNA(Gln) + L-glutamate + ADP + phosphate + H(+). Functionally, allows the formation of correctly charged Gln-tRNA(Gln) through the transamidation of misacylated Glu-tRNA(Gln) in organisms which lack glutaminyl-tRNA synthetase. The reaction takes place in the presence of glutamine and ATP through an activated gamma-phospho-Glu-tRNA(Gln). The sequence is that of Glutamyl-tRNA(Gln) amidotransferase subunit A from Parvibaculum lavamentivorans (strain DS-1 / DSM 13023 / NCIMB 13966).